Here is an 807-residue protein sequence, read N- to C-terminus: Glycerol-3-phosphate acyltransferase (807 aa).

The HXXXXD motif signature appears at 308–313; sequence CHRSHM.

The protein belongs to the GPAT/DAPAT family.

It localises to the cell inner membrane. It carries out the reaction sn-glycerol 3-phosphate + an acyl-CoA = a 1-acyl-sn-glycero-3-phosphate + CoA. It participates in phospholipid metabolism; CDP-diacylglycerol biosynthesis; CDP-diacylglycerol from sn-glycerol 3-phosphate: step 1/3. The sequence is that of Glycerol-3-phosphate acyltransferase from Shewanella denitrificans (strain OS217 / ATCC BAA-1090 / DSM 15013).